Here is a 2528-residue protein sequence, read N- to C-terminus: Reducing polyketide synthase PKS1 (2528 aa).

A Ketosynthase family 3 (KS3) domain is found at 11–436; the sequence is ITPIAVVGMS…GANVHAILES (426 aa). Catalysis depends on for beta-ketoacyl synthase activity residues Cys-186, His-321, and His-359. Residues 573–868 are malonyl-CoA:ACP transacylase (MAT); the sequence is FVFTGQGAQW…LGGPISQVID (296 aa). Residues 954 to 1092 form an N-terminal hotdog fold region; that stretch reads LDLIGVFDVH…GLISVLKSSK (139 aa). Residues 954 to 1278 enclose the PKS/mFAS DH domain; the sequence is LDLIGVFDVH…LVALDRPNSS (325 aa). The segment at 956-1277 is dehydratase (DH) domain; that stretch reads LIGVFDVHSS…TLVALDRPNS (322 aa). Residue His-986 is the Proton acceptor; for dehydratase activity of the active site. The segment at 1122–1278 is C-terminal hotdog fold; the sequence is KTEWDVKDMY…LVALDRPNSS (157 aa). The active-site Proton donor; for dehydratase activity is the Asp-1187. The tract at residues 1827–2139 is enoyl reductase (ER) domain; it reads GLLDSLHFTV…TGRHMGKMVA (313 aa). Residues 2164 to 2341 form a ketoreductase (KR) domain region; the sequence is ASYLLVGGVG…ATVIDIGAVH (178 aa). Residues 2442 to 2519 enclose the Carrier domain; sequence SAVTIVLSAL…ALAVKIAARS (78 aa). Residue Ser-2479 is modified to O-(pantetheine 4'-phosphoryl)serine.

It participates in mycotoxin biosynthesis. Its function is as follows. Reducing polyketide synthase (PKS); part of the Tox1A locus, one of the 2 loci that mediate the biosynthesis of T-toxin, a family of linear polyketides 37 to 45 carbons in length, of which the major component is 41 carbons, and which leads to high virulence to maize. One of the PKSs (PKS1 or PKS2) could synthesize a precursor, used subsequently by the other PKS as starter unit, to add additional carbons. Variability in the length of the final carbon backbone C35-47 could be achieved by varying the number of condensation cycles, or use of different starter or extender units or might be due to decarboxylation of the penultimate product, catalyzed by DEC1. Additional proteins are required for the biosynthesis of T-toxin, including oxidoreductases RED1, RED2, RED3, LAM1 and OXI1, as well as esterase TOX9. This chain is Reducing polyketide synthase PKS1, found in Cochliobolus heterostrophus (strain C4 / ATCC 48331 / race T) (Southern corn leaf blight fungus).